Consider the following 425-residue polypeptide: MAFLALGINHKTASVDVRERVAFTPEQLVDALQQLCRLTSSREAAILSTCNRSELYIEQDHLSADAVLQWLADYHRLSLDELRASAYVHEEHEAVKHMMRVASGLDSLVLGEPQILGQMKSAYAVAREAGTVGPLLGRLFQATFSAAKQVRTDTAIGENPVSVAFAAVSLAKQIFADLGRSQALLIGAGETITLVARHLHEQGVRRIVVANRTLERASILAEQFGAHAVLLADIPQELANSDIVISSTASQLPILGKGAVESALKQRRHKPIFMVDIAVPRDIETEVGELDDVYLYTVDDLHDVVAENLKSRQGAAQAAEELVSVGAEDFMLRLRELAAVDVLRAYRQQSERLRDEELQKALRLLANGGNPEDVLAQLARGLTNKLLHAPSVQLKKLSAEGRLDALAMAQELFALNEGSTDKSPQ.

Residues 49 to 52 (TCNR), S107, 112 to 114 (EPQ), and Q118 each bind substrate. The Nucleophile role is filled by C50. Position 187 to 192 (187 to 192 (GAGETI)) interacts with NADP(+).

Belongs to the glutamyl-tRNA reductase family. As to quaternary structure, homodimer.

It catalyses the reaction (S)-4-amino-5-oxopentanoate + tRNA(Glu) + NADP(+) = L-glutamyl-tRNA(Glu) + NADPH + H(+). It participates in porphyrin-containing compound metabolism; protoporphyrin-IX biosynthesis; 5-aminolevulinate from L-glutamyl-tRNA(Glu): step 1/2. Functionally, catalyzes the NADPH-dependent reduction of glutamyl-tRNA(Glu) to glutamate 1-semialdehyde (GSA). The sequence is that of Glutamyl-tRNA reductase from Pseudomonas putida (strain ATCC 700007 / DSM 6899 / JCM 31910 / BCRC 17059 / LMG 24140 / F1).